Reading from the N-terminus, the 140-residue chain is Ribosome maturation factor RimP (140 aa).

The protein belongs to the RimP family.

The protein localises to the cytoplasm. Functionally, required for maturation of 30S ribosomal subunits. The chain is Ribosome maturation factor RimP from Campylobacter jejuni subsp. jejuni serotype O:2 (strain ATCC 700819 / NCTC 11168).